The chain runs to 418 residues: MIHSLFLINSSGDIFLEKHWKSVVSRSVCDYFFEAQERATEAENVPPVIPTPHHYLLSVYRHKIFFVAVIQTEVPPLFVIEFLHRVVDTFQDYFGVCSEPVIKDNVVVVYEVLEEMLDNGFPLATESNILKELIKPPTILRTVVNTITGSTNVGDQLPTGQLSVVPWRRTGVKYTNNEAYFDVVEEIDAIIDKSGSTVTAEIQGVIDACVKLTGMPDLTLSFMNPRLLDDVSFHPCVRFKRWESERILSFIPPDGNFRLLAYHVSAQNLVAIPVYVKHSISFRDSSSLGRFEITVGPKQTMGKTIEGVIVTSQMPKGVLNMSLTPSQGTHTFDPVTKMLSWDVGKINPQKLPSLKGTMGLQVGASKPDENPTINLQFKIQQLAISGLKVNRLDMYGEKYKPFKGIKYMTKAGKFQVRT.

Residues asparagine 176–arginine 417 form the MHD domain.

It belongs to the adaptor complexes medium subunit family. Adaptor protein complex 3 (AP-3) is a heterotetramer composed of two large adaptins (delta-type subunit AP3D1 and beta-type subunit AP3B1 or AP3B2), a medium adaptin (mu-type subunit AP3M1 or AP3M2) and a small adaptin (sigma-type subunit APS1 or AP3S2). AP-3 associates with the BLOC-1 complex.

The protein localises to the golgi apparatus. The protein resides in the cytoplasmic vesicle membrane. Functionally, component of the adaptor complexes which link clathrin to receptors in coated vesicles. Clathrin-associated protein complexes are believed to interact with the cytoplasmic tails of membrane proteins, leading to their selection and concentration. Ap47 is a subunit of the plasma membrane adaptor. In concert with the BLOC-1 complex, AP-3 is required to target cargos into vesicles assembled at cell bodies for delivery into neurites and nerve terminals. This is AP-3 complex subunit mu-2 (Ap3m2) from Mus musculus (Mouse).